The following is a 261-amino-acid chain: Imidazole glycerol phosphate synthase subunit HisF (261 aa).

Catalysis depends on residues aspartate 16 and aspartate 135.

Belongs to the HisA/HisF family. In terms of assembly, heterodimer of HisH and HisF.

It localises to the cytoplasm. It catalyses the reaction 5-[(5-phospho-1-deoxy-D-ribulos-1-ylimino)methylamino]-1-(5-phospho-beta-D-ribosyl)imidazole-4-carboxamide + L-glutamine = D-erythro-1-(imidazol-4-yl)glycerol 3-phosphate + 5-amino-1-(5-phospho-beta-D-ribosyl)imidazole-4-carboxamide + L-glutamate + H(+). It participates in amino-acid biosynthesis; L-histidine biosynthesis; L-histidine from 5-phospho-alpha-D-ribose 1-diphosphate: step 5/9. IGPS catalyzes the conversion of PRFAR and glutamine to IGP, AICAR and glutamate. The HisF subunit catalyzes the cyclization activity that produces IGP and AICAR from PRFAR using the ammonia provided by the HisH subunit. This is Imidazole glycerol phosphate synthase subunit HisF from Mycobacterium leprae (strain Br4923).